Consider the following 490-residue polypeptide: Dual specificity protein kinase CLK3 (490 aa).

The tract at residues 1-138 (MHHCKRYRSP…SKRSSRSVED (138 aa)) is disordered. Tyrosine 7 bears the Phosphotyrosine mark. 6 positions are modified to phosphoserine: serine 9, serine 49, serine 51, serine 67, serine 76, and serine 78. Basic and acidic residues-rich tracts occupy residues 26–56 (YSREHEGRLRYPSRREPPPRRSRSRSHDRIP) and 63–76 (EHRDSDTYRCEERS). Residues 88–116 (RSRHRRRSRERGPYRTRKHAHHCHKRRTR) are compositionally biased toward basic residues. The segment covering 117–130 (SCSSASSRSQQSSK) has biased composition (low complexity). Serine 135 carries the post-translational modification Phosphoserine. Positions 156–472 (YEIVGNLGEG…LAEALLHPFF (317 aa)) constitute a Protein kinase domain. Residues 162-170 (LGEGTFGKV) and lysine 186 contribute to the ATP site. Aspartate 283 functions as the Proton acceptor in the catalytic mechanism.

Belongs to the protein kinase superfamily. CMGC Ser/Thr protein kinase family. Lammer subfamily. Post-translationally, autophosphorylates on all three types of residues.

Its subcellular location is the nucleus. It localises to the cytoplasm. It is found in the cytoplasmic vesicle. The protein resides in the secretory vesicle. The protein localises to the acrosome. It carries out the reaction L-seryl-[protein] + ATP = O-phospho-L-seryl-[protein] + ADP + H(+). The enzyme catalyses L-threonyl-[protein] + ATP = O-phospho-L-threonyl-[protein] + ADP + H(+). The catalysed reaction is L-tyrosyl-[protein] + ATP = O-phospho-L-tyrosyl-[protein] + ADP + H(+). Its activity is regulated as follows. Leucettine L41 inhibits its kinase activity and affects the regulation of alternative splicing mediated by phosphorylation of SR proteins. In terms of biological role, dual specificity kinase acting on both serine/threonine and tyrosine-containing substrates. Phosphorylates serine- and arginine-rich (SR) proteins of the spliceosomal complex. May be a constituent of a network of regulatory mechanisms that enable SR proteins to control RNA splicing and can cause redistribution of SR proteins from speckles to a diffuse nucleoplasmic distribution. Phosphorylates SRSF1 and SRSF3. Regulates the alternative splicing of tissue factor (F3) pre-mRNA in endothelial cells. The sequence is that of Dual specificity protein kinase CLK3 (Clk3) from Rattus norvegicus (Rat).